A 537-amino-acid chain; its full sequence is ATP synthase subunit alpha (537 aa).

An ATP-binding site is contributed by 174 to 181; that stretch reads GDRQTGKT.

The protein belongs to the ATPase alpha/beta chains family. F-type ATPases have 2 components, CF(1) - the catalytic core - and CF(0) - the membrane proton channel. CF(1) has five subunits: alpha(3), beta(3), gamma(1), delta(1), epsilon(1). CF(0) has three main subunits: a(1), b(2) and c(9-12). The alpha and beta chains form an alternating ring which encloses part of the gamma chain. CF(1) is attached to CF(0) by a central stalk formed by the gamma and epsilon chains, while a peripheral stalk is formed by the delta and b chains.

The protein resides in the cell inner membrane. It catalyses the reaction ATP + H2O + 4 H(+)(in) = ADP + phosphate + 5 H(+)(out). Its function is as follows. Produces ATP from ADP in the presence of a proton gradient across the membrane. The alpha chain is a regulatory subunit. In Verminephrobacter eiseniae (strain EF01-2), this protein is ATP synthase subunit alpha.